Here is an 869-residue protein sequence, read N- to C-terminus: Structure-specific endonuclease subunit SLX4 (869 aa).

Residues 40-59 show a composition bias toward low complexity; sequence SPLSLPSPTSLLDFLSTSTS. Disordered stretches follow at residues 40-79, 92-116, 165-199, 293-323, 351-388, 418-437, and 630-774; these read SPLS…EVLD, NRVV…ESPG, KANQ…INDL, GLSD…NPPK, TLLS…KKNE, ANGH…HISN, and KTSN…ASET. Basic and acidic residues predominate over residues 63–79; it reads ARSDTDGDKTQGKEVLD. 2 stretches are compositionally biased toward polar residues: residues 165-174 and 294-311; these read KANQTVSLQP and LSDS…SATS. Residues 312–322 are compositionally biased toward basic residues; sequence KPRRVKAKNPP. Polar residues-rich tracts occupy residues 647 to 657 and 664 to 673; these read VDESTQGQSLG and SIPQTATTQV. Over residues 688–700 the composition is skewed to low complexity; it reads VPVPSRRSTSTSK. Residues 765 to 774 are compositionally biased toward polar residues; sequence IPSTGTASET.

The protein belongs to the SLX4 family. Forms a heterodimer with SLX1. In terms of processing, phosphorylated in response to DNA damage.

The protein localises to the nucleus. In terms of biological role, regulatory subunit of the SLX1-SLX4 structure-specific endonuclease that resolves DNA secondary structures generated during DNA repair and recombination. Has endonuclease activity towards branched DNA substrates, introducing single-strand cuts in duplex DNA close to junctions with ss-DNA. The protein is Structure-specific endonuclease subunit SLX4 of Paracoccidioides brasiliensis (strain Pb18).